Consider the following 782-residue polypeptide: Anoctamin-9 (782 aa).

Residues methionine 1 to threonine 198 lie on the Cytoplasmic side of the membrane. The helical transmembrane segment at tyrosine 199–phenylalanine 219 threads the bilayer. Residues glutamate 220–asparagine 264 are Extracellular-facing. Phosphoserine; by PKA is present on serine 250. Residues aspartate 265–tryptophan 285 form a helical membrane-spanning segment. Topologically, residues lysine 286–threonine 331 are cytoplasmic. Residues valine 332 to valine 352 traverse the membrane as a helical segment. Topologically, residues valine 353–glutamine 373 are extracellular. A helical membrane pass occupies residues valine 374 to threonine 394. Over lysine 395–arginine 423 the chain is Cytoplasmic. A helical transmembrane segment spans residues phenylalanine 424–glycine 444. The Extracellular segment spans residues arginine 445 to threonine 552. A helical transmembrane segment spans residues isoleucine 553–isoleucine 573. The Cytoplasmic portion of the chain corresponds to arginine 574 to threonine 604. A helical membrane pass occupies residues isoleucine 605–proline 625. At arginine 626–leucine 703 the chain is on the extracellular side. N-linked (GlcNAc...) asparagine glycosylation is found at asparagine 641, asparagine 652, asparagine 674, and asparagine 690. A helical membrane pass occupies residues alanine 704–valine 724. Residues proline 725–valine 782 lie on the Cytoplasmic side of the membrane. The disordered stretch occupies residues glycine 756–valine 782.

The protein belongs to the anoctamin family. Post-translationally, phosphorylated on serine residues by cAMP-dependent protein kinase A (PKA) which is essential for activation of its cation channel activity. In terms of tissue distribution, expressed in the kidney. Expressed in the olfactory epithelium.

Its subcellular location is the cell membrane. The protein localises to the endoplasmic reticulum. It catalyses the reaction a 1,2-diacyl-sn-glycero-3-phospho-L-serine(in) = a 1,2-diacyl-sn-glycero-3-phospho-L-serine(out). The enzyme catalyses a beta-D-galactosyl-(1&lt;-&gt;1')-N-acylsphing-4-enine(out) = a beta-D-galactosyl-(1&lt;-&gt;1')-N-acylsphing-4-enine(in). It carries out the reaction a 1,2-diacyl-sn-glycero-3-phosphocholine(in) = a 1,2-diacyl-sn-glycero-3-phosphocholine(out). The catalysed reaction is Ca(2+)(in) = Ca(2+)(out). It catalyses the reaction Na(+)(in) = Na(+)(out). The enzyme catalyses K(+)(in) = K(+)(out). Cation channel activity is activated via phosphorylation on serine residues by cAMP-dependent protein kinase A (PKA). PKA-activated nonselective cation channel. Discriminates poorly among cations but is more permeable to Ca(2+) ions than to monovalent cations. Acts as a calcium-activated calcium permeable channel which may operate as a endoplasmic reticulum (ER) Ca(2+)-leak channel, reducing the loading of the ER Ca(2+) store. Regulates intracellular Ca2+ signals, ion channel activity, and cytokine release in the renal tissue. Plays an important role in olfaction, amplifying cAMP-evoked cyclic nucleotide-gated (CNG) channel currents in the olfactory sensory neurons. Has calcium-dependent phospholipid scramblase activity; scrambles phosphatidylserine, phosphatidylcholine and galactosylceramide. Does not exhibit calcium-activated chloride channel (CaCC) activity. Can inhibit the activity of ANO1. The sequence is that of Anoctamin-9 (ANO9) from Homo sapiens (Human).